We begin with the raw amino-acid sequence, 357 residues long: Holliday junction branch migration complex subunit RuvB (357 aa).

Residues 1–20 (MDDHDDSPVSPSFLKSDGEI) are disordered. Residues 1-185 (MDDHDDSPVS…FGFTGHMDFY (185 aa)) are large ATPase domain (RuvB-L). Residues L24, R25, G66, K69, T70, S71, 132–134 (EDF), R175, Y185, and R222 each bind ATP. T70 serves as a coordination point for Mg(2+). A small ATPAse domain (RuvB-S) region spans residues 186-256 (EPGELLRILE…VARAALEVYD (71 aa)). Residues 259-357 (TLGLDRLDRA…TSQPTLDLFD (99 aa)) are head domain (RuvB-H). Residues R314 and R319 each contribute to the DNA site.

It belongs to the RuvB family. As to quaternary structure, homohexamer. Forms an RuvA(8)-RuvB(12)-Holliday junction (HJ) complex. HJ DNA is sandwiched between 2 RuvA tetramers; dsDNA enters through RuvA and exits via RuvB. An RuvB hexamer assembles on each DNA strand where it exits the tetramer. Each RuvB hexamer is contacted by two RuvA subunits (via domain III) on 2 adjacent RuvB subunits; this complex drives branch migration. In the full resolvosome a probable DNA-RuvA(4)-RuvB(12)-RuvC(2) complex forms which resolves the HJ.

It localises to the cytoplasm. The catalysed reaction is ATP + H2O = ADP + phosphate + H(+). In terms of biological role, the RuvA-RuvB-RuvC complex processes Holliday junction (HJ) DNA during genetic recombination and DNA repair, while the RuvA-RuvB complex plays an important role in the rescue of blocked DNA replication forks via replication fork reversal (RFR). RuvA specifically binds to HJ cruciform DNA, conferring on it an open structure. The RuvB hexamer acts as an ATP-dependent pump, pulling dsDNA into and through the RuvAB complex. RuvB forms 2 homohexamers on either side of HJ DNA bound by 1 or 2 RuvA tetramers; 4 subunits per hexamer contact DNA at a time. Coordinated motions by a converter formed by DNA-disengaged RuvB subunits stimulates ATP hydrolysis and nucleotide exchange. Immobilization of the converter enables RuvB to convert the ATP-contained energy into a lever motion, pulling 2 nucleotides of DNA out of the RuvA tetramer per ATP hydrolyzed, thus driving DNA branch migration. The RuvB motors rotate together with the DNA substrate, which together with the progressing nucleotide cycle form the mechanistic basis for DNA recombination by continuous HJ branch migration. Branch migration allows RuvC to scan DNA until it finds its consensus sequence, where it cleaves and resolves cruciform DNA. This is Holliday junction branch migration complex subunit RuvB from Nocardia farcinica (strain IFM 10152).